The chain runs to 305 residues: MAPGGSALKEALESNSTGVDYEVKMAKVEANSKPTKSGSGSIGKFHSSNGVYELLECPVCTNLMYPPIHQCPNGHTLCSSCKLRVQNTCPTCRYELGNIRCLALEKVAESLEVPCRYQNLGCQDIFPYYSKLKHEQHCRFRSYSCPYAGSECSVTGDIPTLVDHLKDDHKVDMHDGCTFNHRYVKSNPHEVENATWMLTVFNCFGRQFCLHFEAFQLGMAPVYMAFLRFMGDENEAKKFSYSLEVGAHSRKLTWQGIPRSIRDSHRKVRDSQDGLIIPRNLALYFSGSDKEELKLRVTGRIWKEE.

The RING-type zinc-finger motif lies at 57–93 (CPVCTNLMYPPIHQCPNGHTLCSSCKLRVQNTCPTCR). Residues 107 to 300 (VAESLEVPCR…EELKLRVTGR (194 aa)) are SBD. An SIAH-type zinc finger spans residues 110 to 170 (SLEVPCRYQN…LVDHLKDDHK (61 aa)). Residues Cys115, Cys122, His134, Cys138, Cys145, Cys152, His164, and His169 each coordinate Zn(2+).

This sequence belongs to the SINA (Seven in absentia) family. Interacts with SINAT6. Interacts with ATG6 and TRAF1A. Interacts with WAV3. Interacts with FREE1. Interacts with ELC/VPS23A.

Its subcellular location is the endosome. It is found in the multivesicular body. It localises to the cytoplasmic vesicle. The protein localises to the autophagosome. The catalysed reaction is S-ubiquitinyl-[E2 ubiquitin-conjugating enzyme]-L-cysteine + [acceptor protein]-L-lysine = [E2 ubiquitin-conjugating enzyme]-L-cysteine + N(6)-ubiquitinyl-[acceptor protein]-L-lysine.. Its pathway is protein modification; protein ubiquitination. In terms of biological role, E3 ubiquitin-protein ligase that mediates ubiquitination and subsequent proteasomal degradation of target proteins. E3 ubiquitin ligases accept ubiquitin from an E2 ubiquitin-conjugating enzyme in the form of a thioester and then directly transfers the ubiquitin to targeted substrates. It probably triggers the ubiquitin-mediated degradation of different substrates. Mediates the proteasomal-dependent degradation of ATG6, a component of the autophagosome complex. Requires TRAF1A/MUSE14 and TRAF1B/MUSE13 to target ATG6 for ubiquitination and subsequent regulation of autophagosome assembly. Modulates directly the ubiquitination and proteasomal-dependent degradation of FREE1, a component of the ESCRT-I complex. Modulates directly the ubiquitination and proteasomal-dependent degradation of ELC/VPS23A, a component of the ESCRT-I complex. In Arabidopsis thaliana (Mouse-ear cress), this protein is Putative E3 ubiquitin-protein ligase SINAT1.